The primary structure comprises 378 residues: Cobalt-precorrin-5B C(1)-methyltransferase (378 aa).

It belongs to the CbiD family.

It carries out the reaction Co-precorrin-5B + S-adenosyl-L-methionine = Co-precorrin-6A + S-adenosyl-L-homocysteine. It participates in cofactor biosynthesis; adenosylcobalamin biosynthesis; cob(II)yrinate a,c-diamide from sirohydrochlorin (anaerobic route): step 6/10. In terms of biological role, catalyzes the methylation of C-1 in cobalt-precorrin-5B to form cobalt-precorrin-6A. This is Cobalt-precorrin-5B C(1)-methyltransferase from Photorhabdus laumondii subsp. laumondii (strain DSM 15139 / CIP 105565 / TT01) (Photorhabdus luminescens subsp. laumondii).